The sequence spans 487 residues: 3-octaprenyl-4-hydroxybenzoate carboxy-lyase (487 aa).

Asn-172 is a Mn(2+) binding site. Prenylated FMN-binding positions include 175–177 (IYR), 189–191 (RWL), and 194–195 (RG). Glu-238 lines the Mn(2+) pocket. The active-site Proton donor is Asp-287.

This sequence belongs to the UbiD family. Homohexamer. It depends on prenylated FMN as a cofactor. The cofactor is Mn(2+).

It localises to the cell membrane. The enzyme catalyses a 4-hydroxy-3-(all-trans-polyprenyl)benzoate + H(+) = a 2-(all-trans-polyprenyl)phenol + CO2. It participates in cofactor biosynthesis; ubiquinone biosynthesis. Its function is as follows. Catalyzes the decarboxylation of 3-octaprenyl-4-hydroxy benzoate to 2-octaprenylphenol, an intermediate step in ubiquinone biosynthesis. In Blochmanniella pennsylvanica (strain BPEN), this protein is 3-octaprenyl-4-hydroxybenzoate carboxy-lyase.